A 101-amino-acid chain; its full sequence is Protein S100-A7A (101 aa).

2 EF-hand domains span residues 13-48 (MIDM…SACD) and 50-85 (KGIH…IAAD). Zn(2+) contacts are provided by His18, Glu28, and Glu38. Asp63 and Asn65 together coordinate Ca(2+). A Zn(2+)-binding site is contributed by Glu66. The Ca(2+) site is built by Asp67, Lys69, and Glu74. 2 residues coordinate Zn(2+): His87 and His91.

Belongs to the S-100 family. Overexpressed in psoriasis.

The protein resides in the cytoplasm. Its function is as follows. May be involved in epidermal differentiation and inflammation and might therefore be important for the pathogenesis of psoriasis and other diseases. The protein is Protein S100-A7A (S100A7A) of Homo sapiens (Human).